The primary structure comprises 454 residues: F-box/WD repeat-containing protein 2 (454 aa).

An F-box domain is found at 54–101; it reads RDFLKLLPLELSFYLLKWLDPQTLLTCCLVSKQWNKVISACTEVWQTA. 7 WD repeats span residues 139–175, 179–213, 217–255, 259–306, 313–352, 364–403, and 410–452; these read FETSSLIGHSARVYALYYKDGLLCTGSDDLSAKLWDV, QCVYGIQTHTCAAVKFDEQKLVTGSFDNTVACWEW, ARTQHFRGHTGAVFSVDYNDELDILVSGSADFTVKVWAL, TCLN…IWPI, KCLKTLSVSEDRSICLQPRLHFDGKYIVCSSALGLYQWDF, PEIANLALLGFGDIFALLFDNRYLYIMDLRTESLISRWPL, and KRGS…LWKE. K298 is modified (N6-acetyllysine).

In terms of assembly, directly interacts with SKP1 and CUL1.

Functionally, substrate-recognition component of the SCF (SKP1-CUL1-F-box protein)-type E3 ubiquitin ligase complex. This is F-box/WD repeat-containing protein 2 (FBXW2) from Homo sapiens (Human).